Consider the following 371-residue polypeptide: Chorismate synthase (371 aa).

R48 and R54 together coordinate NADP(+). Residues 125–127 (RSS), 238–239 (NA), G278, 293–297 (KPTSS), and R319 each bind FMN.

This sequence belongs to the chorismate synthase family. In terms of assembly, homotetramer. FMNH2 is required as a cofactor.

It carries out the reaction 5-O-(1-carboxyvinyl)-3-phosphoshikimate = chorismate + phosphate. It functions in the pathway metabolic intermediate biosynthesis; chorismate biosynthesis; chorismate from D-erythrose 4-phosphate and phosphoenolpyruvate: step 7/7. Its function is as follows. Catalyzes the anti-1,4-elimination of the C-3 phosphate and the C-6 proR hydrogen from 5-enolpyruvylshikimate-3-phosphate (EPSP) to yield chorismate, which is the branch point compound that serves as the starting substrate for the three terminal pathways of aromatic amino acid biosynthesis. This reaction introduces a second double bond into the aromatic ring system. This chain is Chorismate synthase, found in Polynucleobacter asymbioticus (strain DSM 18221 / CIP 109841 / QLW-P1DMWA-1) (Polynucleobacter necessarius subsp. asymbioticus).